Consider the following 43-residue polypeptide: uncharacterized protein (43 aa).

This is an uncharacterized protein from Rickettsia prowazekii (strain Madrid E).